Reading from the N-terminus, the 177-residue chain is Probable inosine/xanthosine triphosphatase (177 aa).

Belongs to the YjjX NTPase family. In terms of assembly, homodimer. Requires Mg(2+) as cofactor. It depends on Mn(2+) as a cofactor.

It carries out the reaction XTP + H2O = XDP + phosphate + H(+). The catalysed reaction is ITP + H2O = IDP + phosphate + H(+). Functionally, phosphatase that hydrolyzes non-canonical purine nucleotides such as XTP and ITP to their respective diphosphate derivatives. Probably excludes non-canonical purines from DNA/RNA precursor pool, thus preventing their incorporation into DNA/RNA and avoiding chromosomal lesions. The sequence is that of Probable inosine/xanthosine triphosphatase from Pyrobaculum arsenaticum (strain DSM 13514 / JCM 11321 / PZ6).